Reading from the N-terminus, the 713-residue chain is Protein tyrosine phosphatase domain-containing protein 1 (713 aa).

A Tyrosine-protein phosphatase domain is found at 80 to 251; the sequence is YSSWITDHLL…LVPLRSVFSC (172 aa). Catalysis depends on C188, which acts as the Phosphocysteine intermediate.

Belongs to the protein-tyrosine phosphatase family. Non-receptor class PTPDC1 subfamily.

Its function is as follows. May play roles in cilia formation and/or maintenance. The sequence is that of Protein tyrosine phosphatase domain-containing protein 1 (ptpdc1) from Danio rerio (Zebrafish).